Reading from the N-terminus, the 1252-residue chain is Myosin-3 (1252 aa).

The region spanning 36 to 715 (VGVSDLTLLS…TLFALENMRD (680 aa)) is the Myosin motor domain. Position 129–136 (129–136 (GESGAGKT)) interacts with ATP. At serine 357 the chain carries Phosphoserine. An actin-binding region spans residues 404 to 486 (SIGILDIYGF…PGIFAAMNDA (83 aa)). IQ domains follow at residues 719–739 (YNMAARIQRAWRRYLQKRIDA) and 740–767 (AIRIQNAIRGKSGVSTFRNDELRNAGDK). A TH1 domain is found at 773 to 963 (KERRNMSLLG…TILVRHGNPP (191 aa)). Disordered regions lie at residues 988-1086 (KTMK…KTSV), 1106-1136 (YSLPENIPQSSQTDSYQAAYDFPGSGNPSEL), and 1203-1252 (INEP…DDDW). Positions 997-1016 (KRTPQALPTSSLAASAAQAA) are enriched in low complexity. 3 stretches are compositionally biased toward polar residues: residues 1050 to 1063 (PVRNTSKTISNSKV), 1106 to 1121 (YSLPENIPQSSQTDSY), and 1203 to 1219 (INEPETHTNQGPSNTDL). Positions 1116-1178 (SQTDSYQAAY…PTSYIVKYNG (63 aa)) constitute an SH3 domain. Positions 1238-1252 (SEEDISREEDDDDDW) are enriched in acidic residues.

This sequence belongs to the TRAFAC class myosin-kinesin ATPase superfamily. Myosin family. In terms of processing, phosphorylation of the TEDS site (Ser-357) is required for the polarization of the actin cytoskeleton. Phosphorylation probably activates the myosin-I ATPase activity.

It is found in the cytoplasm. Its subcellular location is the cytoskeleton. The protein localises to the actin patch. Functionally, type-I myosin implicated in the organization of the actin cytoskeleton. Required for proper actin cytoskeleton polarization. At the cell cortex, assembles in patch-like structures together with proteins from the actin-polymerizing machinery and promotes actin assembly. Functions as actin nucleation-promoting factor (NPF) for the Arp2/3 complex. The polypeptide is Myosin-3 (MYO3) (Candida glabrata (strain ATCC 2001 / BCRC 20586 / JCM 3761 / NBRC 0622 / NRRL Y-65 / CBS 138) (Yeast)).